Here is a 127-residue protein sequence, read N- to C-terminus: Small ribosomal subunit protein uS11 (127 aa).

Belongs to the universal ribosomal protein uS11 family. Part of the 30S ribosomal subunit. Interacts with proteins S7 and S18. Binds to IF-3.

Functionally, located on the platform of the 30S subunit, it bridges several disparate RNA helices of the 16S rRNA. Forms part of the Shine-Dalgarno cleft in the 70S ribosome. The chain is Small ribosomal subunit protein uS11 from Pelodictyon phaeoclathratiforme (strain DSM 5477 / BU-1).